Reading from the N-terminus, the 472-residue chain is Argininosuccinate lyase (472 aa).

This sequence belongs to the lyase 1 family. Argininosuccinate lyase subfamily.

It localises to the cytoplasm. The catalysed reaction is 2-(N(omega)-L-arginino)succinate = fumarate + L-arginine. Its pathway is amino-acid biosynthesis; L-arginine biosynthesis; L-arginine from L-ornithine and carbamoyl phosphate: step 3/3. The polypeptide is Argininosuccinate lyase (Rhodococcus opacus (strain B4)).